Consider the following 138-residue polypeptide: Large ribosomal subunit protein uL16 (138 aa).

Positions 1-13 (MLQPARRKFRKEQ) are enriched in basic residues. The disordered stretch occupies residues 1-22 (MLQPARRKFRKEQKGRNTGLAT).

Belongs to the universal ribosomal protein uL16 family. In terms of assembly, part of the 50S ribosomal subunit.

Functionally, binds 23S rRNA and is also seen to make contacts with the A and possibly P site tRNAs. This Thiobacillus denitrificans (strain ATCC 25259 / T1) protein is Large ribosomal subunit protein uL16.